We begin with the raw amino-acid sequence, 190 residues long: Probable gluconokinase (190 aa).

Position 7-14 (7-14 (GVSGSGKT)) interacts with ATP.

It belongs to the gluconokinase GntK/GntV family.

It carries out the reaction D-gluconate + ATP = 6-phospho-D-gluconate + ADP + H(+). Its pathway is carbohydrate acid metabolism; D-gluconate degradation. The polypeptide is Probable gluconokinase (idnk) (Xenopus tropicalis (Western clawed frog)).